The primary structure comprises 336 residues: Ornithine carbamoyltransferase, catabolic (336 aa).

Carbamoyl phosphate contacts are provided by residues 57 to 60 (STRT), Gln-84, Arg-108, and 135 to 138 (HPTQ). Residues Asn-168, Asp-232, and 236 to 237 (SM) contribute to the L-ornithine site. Carbamoyl phosphate-binding positions include 274–275 (CL) and Arg-321.

The protein belongs to the aspartate/ornithine carbamoyltransferase superfamily. OTCase family.

The protein localises to the cytoplasm. The catalysed reaction is carbamoyl phosphate + L-ornithine = L-citrulline + phosphate + H(+). It participates in amino-acid degradation; L-arginine degradation via ADI pathway; carbamoyl phosphate from L-arginine: step 2/2. Functionally, reversibly catalyzes the transfer of the carbamoyl group from carbamoyl phosphate (CP) to the N(epsilon) atom of ornithine (ORN) to produce L-citrulline. The chain is Ornithine carbamoyltransferase, catabolic from Burkholderia pseudomallei (strain K96243).